The primary structure comprises 303 residues: UDP-3-O-acyl-N-acetylglucosamine deacetylase (303 aa).

The Zn(2+) site is built by H78, H237, and D241. Residue H264 is the Proton donor of the active site.

Belongs to the LpxC family. The cofactor is Zn(2+).

The catalysed reaction is a UDP-3-O-[(3R)-3-hydroxyacyl]-N-acetyl-alpha-D-glucosamine + H2O = a UDP-3-O-[(3R)-3-hydroxyacyl]-alpha-D-glucosamine + acetate. Its pathway is glycolipid biosynthesis; lipid IV(A) biosynthesis; lipid IV(A) from (3R)-3-hydroxytetradecanoyl-[acyl-carrier-protein] and UDP-N-acetyl-alpha-D-glucosamine: step 2/6. In terms of biological role, catalyzes the hydrolysis of UDP-3-O-myristoyl-N-acetylglucosamine to form UDP-3-O-myristoylglucosamine and acetate, the committed step in lipid A biosynthesis. The protein is UDP-3-O-acyl-N-acetylglucosamine deacetylase of Pseudomonas paraeruginosa (strain DSM 24068 / PA7) (Pseudomonas aeruginosa (strain PA7)).